A 194-amino-acid polypeptide reads, in one-letter code: dTTP/UTP pyrophosphatase (194 aa).

Aspartate 77 acts as the Proton acceptor in catalysis.

This sequence belongs to the Maf family. YhdE subfamily. The cofactor is a divalent metal cation.

The protein localises to the cytoplasm. It carries out the reaction dTTP + H2O = dTMP + diphosphate + H(+). The enzyme catalyses UTP + H2O = UMP + diphosphate + H(+). Its function is as follows. Nucleoside triphosphate pyrophosphatase that hydrolyzes dTTP and UTP. May have a dual role in cell division arrest and in preventing the incorporation of modified nucleotides into cellular nucleic acids. This Flavobacterium johnsoniae (strain ATCC 17061 / DSM 2064 / JCM 8514 / BCRC 14874 / CCUG 350202 / NBRC 14942 / NCIMB 11054 / UW101) (Cytophaga johnsonae) protein is dTTP/UTP pyrophosphatase.